The primary structure comprises 368 residues: Apolipoprotein A-V (368 aa).

The N-terminal stretch at 1 to 20 (MAAVITWALALLAVFASTQA) is a signal peptide. Position 52 is a phosphoserine (Ser52). Residues 231–255 (TRKAKDLHTSIQRNLDQLRDELSAF) adopt a coiled-coil conformation. Residues 305 to 333 (EEIQHQLAPPPPSHSAFAPELGHSDSNKA) are disordered.

The protein belongs to the apolipoprotein A1/A4/E family. As to quaternary structure, interacts with GPIHBP1. Interacts with SORL1; this interaction leads to APOA5 internalization and sorting either to lysosomes and degradation, or to the trans-Golgi network. Post-translationally, phosphorylated by FAM20C in the extracellular medium. In terms of tissue distribution, liver.

It localises to the secreted. The protein localises to the early endosome. Its subcellular location is the late endosome. The protein resides in the golgi apparatus. It is found in the trans-Golgi network. Its function is as follows. Minor apolipoprotein mainly associated with HDL and to a lesser extent with VLDL. May also be associated with chylomicrons. Important determinant of plasma triglyceride (TG) levels by both being a potent stimulator of apo-CII lipoprotein lipase (LPL) TG hydrolysis and an inhibitor of the hepatic VLDL-TG production rate (without affecting the VLDL-apoB production rate). Activates poorly lecithin:cholesterol acyltransferase (LCAT) and does not enhance efflux of cholesterol from macrophages. Binds heparin. This is Apolipoprotein A-V (Apoa5) from Mus musculus (Mouse).